The sequence spans 147 residues: 3-dehydroquinate dehydratase (147 aa).

Residue Y24 is the Proton acceptor of the active site. Positions 75, 81, and 88 each coordinate substrate. The Proton donor role is filled by H101. Substrate is bound by residues 102-103 (LS) and R112.

The protein belongs to the type-II 3-dehydroquinase family. As to quaternary structure, homododecamer.

It carries out the reaction 3-dehydroquinate = 3-dehydroshikimate + H2O. The protein operates within metabolic intermediate biosynthesis; chorismate biosynthesis; chorismate from D-erythrose 4-phosphate and phosphoenolpyruvate: step 3/7. Functionally, catalyzes a trans-dehydration via an enolate intermediate. This is 3-dehydroquinate dehydratase from Caulobacter sp. (strain K31).